The chain runs to 580 residues: 2-succinyl-5-enolpyruvyl-6-hydroxy-3-cyclohexene-1-carboxylate synthase (580 aa).

This sequence belongs to the TPP enzyme family. MenD subfamily. Homodimer. It depends on Mg(2+) as a cofactor. Requires Mn(2+) as cofactor. Thiamine diphosphate serves as cofactor.

The enzyme catalyses isochorismate + 2-oxoglutarate + H(+) = 5-enolpyruvoyl-6-hydroxy-2-succinyl-cyclohex-3-ene-1-carboxylate + CO2. Its pathway is quinol/quinone metabolism; 1,4-dihydroxy-2-naphthoate biosynthesis; 1,4-dihydroxy-2-naphthoate from chorismate: step 2/7. It functions in the pathway quinol/quinone metabolism; menaquinone biosynthesis. Functionally, catalyzes the thiamine diphosphate-dependent decarboxylation of 2-oxoglutarate and the subsequent addition of the resulting succinic semialdehyde-thiamine pyrophosphate anion to isochorismate to yield 2-succinyl-5-enolpyruvyl-6-hydroxy-3-cyclohexene-1-carboxylate (SEPHCHC). In Listeria innocua serovar 6a (strain ATCC BAA-680 / CLIP 11262), this protein is 2-succinyl-5-enolpyruvyl-6-hydroxy-3-cyclohexene-1-carboxylate synthase.